Reading from the N-terminus, the 965-residue chain is Kinesin-like protein KIN-7K, chloroplastic (965 aa).

The disordered stretch occupies residues 1 to 69 (MASRQGSKSR…PQTAQRSKEN (69 aa)). A compositionally biased stretch (low complexity) spans 19 to 28 (STASSTTSSS). The span at 29 to 38 (KLYQETSIDG) shows a compositional bias: polar residues. Low complexity predominate over residues 40–56 (SSPASSSAQSKQQFFSP). The 320-residue stretch at 69–388 (NVTVTVRFRP…LKFAHRAKHI (320 aa)) folds into the Kinesin motor domain. 149 to 156 (GVTSSGKT) serves as a coordination point for ATP. Residues 389–483 (EIQAEQNKII…LTKLILVSTK (95 aa)) adopt a coiled-coil conformation. Residues 551–561 (LLNWLKPKKRD) are compositionally biased toward basic residues. Disordered stretches follow at residues 551-633 (LLNW…KMSD) and 842-888 (ATQK…ELRM). Residues 564–577 (SSASDQSSVVKSNS) are compositionally biased toward low complexity. The span at 606-623 (SEPREDREALEDSSHEME) shows a compositional bias: basic and acidic residues. Coiled coils occupy residues 628-703 (SNKM…FVMT) and 738-846 (NRII…TQKS). The segment covering 851–862 (RNKTGTTTNVRN) has biased composition (low complexity). Positions 864 to 888 (GRRESLAKRQEHDSPSMELKRELRM) are enriched in basic and acidic residues. A coiled-coil region spans residues 896-931 (YEAALGEKEQREAELERILEETKQREAYLENELANM). Positions 942–965 (QGADSEISDSISETRQTEQTEGSF) are disordered. The span at 949 to 965 (SDSISETRQTEQTEGSF) shows a compositional bias: polar residues.

Belongs to the TRAFAC class myosin-kinesin ATPase superfamily. Kinesin family. KIN-7 subfamily.

The protein localises to the plastid. It localises to the chloroplast. The protein is Kinesin-like protein KIN-7K, chloroplastic of Arabidopsis thaliana (Mouse-ear cress).